The chain runs to 465 residues: Na(+)-translocating NADH-quinone reductase subunit A (465 aa).

This sequence belongs to the NqrA family. Composed of six subunits; NqrA, NqrB, NqrC, NqrD, NqrE and NqrF.

It catalyses the reaction a ubiquinone + n Na(+)(in) + NADH + H(+) = a ubiquinol + n Na(+)(out) + NAD(+). In terms of biological role, NQR complex catalyzes the reduction of ubiquinone-1 to ubiquinol by two successive reactions, coupled with the transport of Na(+) ions from the cytoplasm to the periplasm. NqrA to NqrE are probably involved in the second step, the conversion of ubisemiquinone to ubiquinol. The sequence is that of Na(+)-translocating NADH-quinone reductase subunit A from Chlamydia muridarum (strain MoPn / Nigg).